Reading from the N-terminus, the 1093-residue chain is Protein AF-17 (1093 aa).

A PHD-type 1 zinc finger spans residues 5–57; it reads VGGCCVCSDERGWAENPLVYCDGHACSVAVHQACYGIVQVPTGPWFCRKCESQ. Residues 62 to 95 form a C2HC pre-PHD-type zinc finger; that stretch reads RVRCELCPHKDGALKRTDNGGWAHVVCALYIPEV. The segment at 118-181 adopts a PHD-type 2 zinc-finger fold; it reads KTCYICEEQG…KYCGYCKYHF (64 aa). The tract at residues 185 to 500 is disordered; the sequence is KTSRHSSGGG…GGPAAPSLPS (316 aa). Gly residues predominate over residues 191-212; that stretch reads SGGGGGGAGGGGGSMGGGGSGF. Positions 231 to 255 are enriched in basic residues; that stretch reads PTHHERGQKKSRKDKERLKQKHKKR. Ser258 is subject to Phosphoserine. Residues 258–268 show a composition bias toward pro residues; sequence SPPSILTPPVV. A compositionally biased stretch (basic and acidic residues) spans 282 to 300; the sequence is SHHEASTQETSESSRESKG. Over residues 301 to 316 the composition is skewed to basic residues; it reads KKSSSHSLSHKGKKLS. The segment covering 317 to 340 has biased composition (low complexity); it reads SGKGVSSFTSASSSSSSSSSSSGG. Residues 345 to 354 show a composition bias toward polar residues; sequence AVSSLQSSPD. A compositionally biased stretch (pro residues) spans 374 to 388; it reads APAPSAPPSPSAPEP. 2 positions are modified to phosphoserine: Ser378 and Ser423. A compositionally biased stretch (low complexity) spans 410 to 425; that stretch reads STTTSSSGRARAPSPG. Phosphothreonine is present on Thr451. Residues 465 to 484 are compositionally biased toward basic residues; sequence EKKHKASKRSRHGPGRPKGS. The segment at 729–764 is leucine-zipper; sequence LQKENQRLQEQILSLTAKKERLQILNVQLSVPFPAL. Disordered stretches follow at residues 775–871 and 1060–1093; these read VPGP…RAPG and QTNPFLSLSGAEGSGGGPKGGTADKGASANQEKG. The span at 787-796 shows a compositional bias: low complexity; the sequence is SSDSLSTSKS. Residues 804 to 813 show a composition bias toward polar residues; it reads GLDNSLSTSS. Composition is skewed to low complexity over residues 818-832 and 839-853; these read SGCPSRSSSSLSFHS and LLQQSPATLPLALPG.

Interacts with histone H3; interaction is necessary for MLLT6 binding to nucleosomes; interaction is inhibited by histone H3 'Lys-27' methylations (H3K27me1, H3K27me2 and H3K27me3).

The protein resides in the nucleus. In Homo sapiens (Human), this protein is Protein AF-17 (MLLT6).